A 352-amino-acid chain; its full sequence is C-C chemokine receptor type 5 (352 aa).

The Extracellular portion of the chain corresponds to 1–30 (MDYQVSSPTYDIDYYTSEPCQKINVKQIAA). The residue at position 3 (Tyr-3) is a Sulfotyrosine. Residues Ser-6 and Ser-7 are each glycosylated (O-linked (GalNAc...) serine). Sulfotyrosine occurs at positions 10, 14, and 15. 2 disulfide bridges follow: Cys-20–Cys-269 and Cys-101–Cys-178. A helical membrane pass occupies residues 31 to 58 (RLLPPLYSLVFIFGFVGNMLVILILINC). The Cytoplasmic portion of the chain corresponds to 59 to 68 (KRLKSMTDIY). The chain crosses the membrane as a helical span at residues 69–89 (LLNLAISDLFFLLTVPFWAHY). Topologically, residues 90–102 (AAAQWDFGNTMCQ) are extracellular. The chain crosses the membrane as a helical span at residues 103–124 (LLTGLYFIGFFSGIFFIILLTI). The Cytoplasmic segment spans residues 125–141 (DRYLAIVHAVFALKART). Residues 142 to 166 (VTFGVVTSVITWVVAVFASLPGIIF) traverse the membrane as a helical segment. The Extracellular portion of the chain corresponds to 167–198 (TRSQKEGLHYTCSSHFPYSQYQFWKNFQTLKI). Residues 199 to 218 (VILGLVLPLLVMVICYSGIL) form a helical membrane-spanning segment. Residues 219 to 235 (KTLLRCRNEKKRHRAVR) lie on the Cytoplasmic side of the membrane. A helical transmembrane segment spans residues 236 to 260 (LIFTIMIVYFLFWAPYNIVLLLNTF). Topologically, residues 261 to 277 (QEFFGLNNCSSSNRLDQ) are extracellular. A helical membrane pass occupies residues 278–301 (AMQVTETLGMTHCCINPIIYAFVG). The Cytoplasmic portion of the chain corresponds to 302–352 (EKFRNYLLVFFQKHIAKHFCKCCSIFQQEAPERASSVYTRSTGEQEISVGL). S-palmitoyl cysteine attachment occurs at residues Cys-321, Cys-323, and Cys-324. 4 positions are modified to phosphoserine; by BARK1: Ser-336, Ser-337, Ser-342, and Ser-349.

It belongs to the G-protein coupled receptor 1 family. Interacts with PRAF2. Efficient ligand binding to CCL3/MIP-1alpha and CCL4/MIP-1beta requires sulfation, O-glycosylation and sialic acid modifications. Glycosylation on Ser-6 is required for efficient binding of CCL4. Interacts with GRK2. Interacts with ARRB1 and ARRB2. Interacts with CNIH4. Interacts with S100A4; this interaction stimulates T-lymphocyte chemotaxis. Post-translationally, sulfated on at least 2 of the N-terminal tyrosines. Sulfation is required for efficient binding of the chemokines, CCL3 and CCL4. In terms of processing, palmitoylation in the C-terminal is important for cell surface expression. Phosphorylation on serine residues in the C-terminal is stimulated by binding CC chemokines especially by APO-RANTES. Post-translationally, O-glycosylated, but not N-glycosylated. Ser-6 appears to be the major site even if Ser-7 may be also O-glycosylated. Also sialylated glycans present which contribute to chemokine binding. Thr-16 and Ser-17 may also be glycosylated and, if so, with small moieties such as a T-antigen.

Its subcellular location is the cell membrane. Its function is as follows. Receptor for a number of inflammatory CC-chemokines including CCL3/MIP-1-alpha, CCL4/MIP-1-beta and RANTES and subsequently transduces a signal by increasing the intracellular calcium ion level. May play a role in the control of granulocytic lineage proliferation or differentiation. Participates in T-lymphocyte migration to the infection site by acting as a chemotactic receptor. This is C-C chemokine receptor type 5 (CCR5) from Symphalangus syndactylus (Siamang).